A 268-amino-acid chain; its full sequence is Homeobox protein Hox-D12 (268 aa).

A disordered region spans residues threonine 102–serine 124. Residues alanine 200 to valine 259 constitute a DNA-binding region (homeobox).

This sequence belongs to the Abd-B homeobox family.

It localises to the nucleus. Its function is as follows. Sequence-specific transcription factor which is part of a developmental regulatory system that provides cells with specific positional identities on the anterior-posterior axis. The chain is Homeobox protein Hox-D12 (Hoxd12) from Mus musculus (Mouse).